The sequence spans 427 residues: Glutamate-1-semialdehyde 2,1-aminomutase (427 aa).

Residue lysine 267 is modified to N6-(pyridoxal phosphate)lysine.

Belongs to the class-III pyridoxal-phosphate-dependent aminotransferase family. HemL subfamily. Homodimer. Pyridoxal 5'-phosphate serves as cofactor.

Its subcellular location is the cytoplasm. It catalyses the reaction (S)-4-amino-5-oxopentanoate = 5-aminolevulinate. It participates in porphyrin-containing compound metabolism; protoporphyrin-IX biosynthesis; 5-aminolevulinate from L-glutamyl-tRNA(Glu): step 2/2. The protein is Glutamate-1-semialdehyde 2,1-aminomutase of Thermodesulfovibrio yellowstonii (strain ATCC 51303 / DSM 11347 / YP87).